Consider the following 649-residue polypeptide: MLQRLVVALCLLGFAALTAAAAHQRPNFVVIFTDDQDGIQNSTHPRYQPKLHEHIRYPGIELKNYFVTTPVCCPSRTNLWRGQFSHNTNFTDVLGPHGGYAKWKSLGIDKSYLPVWLQNLGYNTYYVGKFLVDYSVSNYQNVPAGWTDIDALVTPYTFDYNNPGFSRNGATPNIYPGFYSTDVIADKAVAQIKTAVAAGKPFYAQISPIAPHTSTQIYFDPVANATKTFFYPPIPAPRHWELFSDATLPEGTSHKNLYEADVSDKPAWIRALPLAQQNNRTYLEEVYRLRLRSLASVDELIDRVVATLQEAGVLDNTYLIYSADNGYHVGTHRFGAGKVTAYDEDLRVPFLIRGPGIRASHSDKPANSKVGLHVDFAPTILTLAGAGDQVGDKALDGTPLGLYANDDGNLLADYPRPANHRNQFQGEFWGGWSDEVLHHIPRYTNNSWKAVRVYDEDNQQAWKLIVSCTNERELYDLKTDPGELCNIYNKTRAAVRTRLEALLAVLVVCKGESCTNPWKILHPEGSVNSWNQSLDRKYDKYYANVAPFQYRTCLPYQDHNNEVSAFRSTVAAAAAAAAAAAAQQPGRRRMYTWTSAGRQLSATASAIATSPQPRSEPFVAEVERHSVPVPAEVLQSDVAKWFDNPLALA.

The signal sequence occupies residues M1–A22. Ca(2+) is bound by residues D34 and D35. N41 is a glycosylation site (N-linked (GlcNAc...) asparagine). Ca(2+) is bound at residue C72. C72 functions as the Nucleophile in the catalytic mechanism. 3-oxoalanine (Cys) is present on C72. Residues N89, N224, and N279 are each glycosylated (N-linked (GlcNAc...) asparagine). The Ca(2+) site is built by D324 and N325. N-linked (GlcNAc...) asparagine glycosylation is found at N445, N489, and N531.

Belongs to the sulfatase family. Requires Ca(2+) as cofactor. Post-translationally, the conversion to 3-oxoalanine (also known as C-formylglycine, FGly), of a serine or cysteine residue in prokaryotes and of a cysteine residue in eukaryotes, is critical for catalytic activity.

The protein localises to the periplasm. The catalysed reaction is an aryl sulfate + H2O = a phenol + sulfate + H(+). Inhibited by Na(3)BO(3) and KCN. No inhibition by sodium dodecyl sulfate, even at high concentration. In terms of biological role, is commonly produced by soil microorganisms and plays an important role in the mineralization of sulfates. This chain is Arylsulfatase, found in Volvox carteri (Green alga).